The chain runs to 105 residues: Small ribosomal subunit protein uS10 (105 aa).

This sequence belongs to the universal ribosomal protein uS10 family. Part of the 30S ribosomal subunit.

Involved in the binding of tRNA to the ribosomes. The protein is Small ribosomal subunit protein uS10 of Solidesulfovibrio magneticus (strain ATCC 700980 / DSM 13731 / RS-1) (Desulfovibrio magneticus).